Here is a 188-residue protein sequence, read N- to C-terminus: GTP cyclohydrolase 1 (188 aa).

3 residues coordinate Zn(2+): Cys78, His81, and Cys150.

The protein belongs to the GTP cyclohydrolase I family. Toroid-shaped homodecamer, composed of two pentamers of five dimers.

The catalysed reaction is GTP + H2O = 7,8-dihydroneopterin 3'-triphosphate + formate + H(+). It functions in the pathway cofactor biosynthesis; 7,8-dihydroneopterin triphosphate biosynthesis; 7,8-dihydroneopterin triphosphate from GTP: step 1/1. This is GTP cyclohydrolase 1 from Halalkalibacterium halodurans (strain ATCC BAA-125 / DSM 18197 / FERM 7344 / JCM 9153 / C-125) (Bacillus halodurans).